Here is a 119-residue protein sequence, read N- to C-terminus: MPRVKRGVTAKARHKKILKLAKGYRGRRKNVYRIAKQAVMKAGQYAYRDRRQRKRQFRTLWIARINAAARELGMTYSTFMNGIRKAGISLDRKILADLAVFDKVAFEKITNQVKAGLAN.

It belongs to the bacterial ribosomal protein bL20 family.

Binds directly to 23S ribosomal RNA and is necessary for the in vitro assembly process of the 50S ribosomal subunit. It is not involved in the protein synthesizing functions of that subunit. This is Large ribosomal subunit protein bL20 from Nitrosomonas europaea (strain ATCC 19718 / CIP 103999 / KCTC 2705 / NBRC 14298).